The sequence spans 790 residues: Probable copper-transporting ATPase SynA (790 aa).

Residues 1 to 105 (MPAAIVHSAD…IPPLQQQRLQ (105 aa)) lie on the Cytoplasmic side of the membrane. The 68-residue stretch at 14–81 (TSILVEVEGM…EITGLGFRAQ (68 aa)) folds into the HMA domain. Cu(+) contacts are provided by Cys25 and Cys28. A helical membrane pass occupies residues 106-127 (LAIAAFLLIVSSWGHLGHWLDH). The Extracellular segment spans residues 128–136 (PLPGTDQLW). Residues 137–156 (FHALLATWALLGPGRSILQA) traverse the membrane as a helical segment. The Cytoplasmic portion of the chain corresponds to 157-163 (GWQGLRC). Residues 164 to 184 (GAPNMNSLVLLGTGSAYLASL) traverse the membrane as a helical segment. At 185–198 (VALLWPQLGWVCFF) the chain is on the extracellular side. The chain crosses the membrane as a helical span at residues 199-219 (DEPVMLLGFILLGRTLEEQAR). The Cytoplasmic segment spans residues 220-358 (FRSQAALQNL…KAPVQRFADA (139 aa)). Residues 359 to 381 (IAGRFVYGVCAIAALTFGFWATL) form a helical membrane-spanning segment. Residues 382 to 420 (GSRWWPQVLQQPLPGLLIHAPHHGMEMAHPHSHSPLLLA) lie on the Extracellular side of the membrane. A helical membrane pass occupies residues 421–438 (LTLAISVLVVACPCALGL). The Cytoplasmic segment spans residues 439-723 (ATPTAILVAT…NLSQMGLRTI (285 aa)). Asp476 functions as the 4-aspartylphosphate intermediate in the catalytic mechanism. 2 residues coordinate Mg(2+): Asp669 and Asp673. The helical transmembrane segment at 724 to 743 (RQNLTWALGYNVVMLPLAAG) threads the bilayer. Over 744–755 (AFLPAYGLALTP) the chain is Extracellular. The chain crosses the membrane as a helical span at residues 756-774 (AIAGACMAVSSLAVVSNSL). At 775–790 (LLRYWFRRSLNHSVSV) the chain is on the cytoplasmic side.

It belongs to the cation transport ATPase (P-type) (TC 3.A.3) family. Type IB subfamily.

Its subcellular location is the cell membrane. It catalyses the reaction Cu(+)(in) + ATP + H2O = Cu(+)(out) + ADP + phosphate + H(+). Its function is as follows. Involved in copper transport. This is Probable copper-transporting ATPase SynA (synA) from Synechococcus elongatus (strain ATCC 33912 / PCC 7942 / FACHB-805) (Anacystis nidulans R2).